Here is a 90-residue protein sequence, read N- to C-terminus: Putative defensin-like protein 243 (90 aa).

The N-terminal stretch at 1 to 19 (MKVEVIFLASCVLFSLIHA) is a signal peptide. 4 cysteine pairs are disulfide-bonded: cysteine 33-cysteine 88, cysteine 43-cysteine 72, cysteine 53-cysteine 82, and cysteine 70-cysteine 84.

The protein belongs to the DEFL family.

Its subcellular location is the secreted. This is Putative defensin-like protein 243 (SCRL9) from Arabidopsis thaliana (Mouse-ear cress).